The following is a 608-amino-acid chain: UvrABC system protein C (608 aa).

The 79-residue stretch at 16-94 (NRPGVYRMFD…IKEWRPPYNI (79 aa)) folds into the GIY-YIG domain. Positions 204-239 (NALADELNVGMEQAAMRLDFEKAAELRDQVAILRRV) constitute a UVR domain.

The protein belongs to the UvrC family. Interacts with UvrB in an incision complex.

Its subcellular location is the cytoplasm. Its function is as follows. The UvrABC repair system catalyzes the recognition and processing of DNA lesions. UvrC both incises the 5' and 3' sides of the lesion. The N-terminal half is responsible for the 3' incision and the C-terminal half is responsible for the 5' incision. The protein is UvrABC system protein C of Pseudomonas aeruginosa (strain ATCC 15692 / DSM 22644 / CIP 104116 / JCM 14847 / LMG 12228 / 1C / PRS 101 / PAO1).